A 99-amino-acid polypeptide reads, in one-letter code: NADH-quinone oxidoreductase subunit K (99 aa).

A run of 3 helical transmembrane segments spans residues Val-3–Ile-23, Ile-28–Phe-48, and Ile-59–Ile-79.

It belongs to the complex I subunit 4L family. In terms of assembly, NDH-1 is composed of 14 different subunits. Subunits NuoA, H, J, K, L, M, N constitute the membrane sector of the complex.

It localises to the cell membrane. It catalyses the reaction a quinone + NADH + 5 H(+)(in) = a quinol + NAD(+) + 4 H(+)(out). NDH-1 shuttles electrons from NADH, via FMN and iron-sulfur (Fe-S) centers, to quinones in the respiratory chain. The immediate electron acceptor for the enzyme in this species is believed to be a menaquinone. Couples the redox reaction to proton translocation (for every two electrons transferred, four hydrogen ions are translocated across the cytoplasmic membrane), and thus conserves the redox energy in a proton gradient. In Nocardioides sp. (strain ATCC BAA-499 / JS614), this protein is NADH-quinone oxidoreductase subunit K.